The sequence spans 101 residues: MSHNHDHNHDHEVISLVDEQGNETLFEILLTIDGREEFGKNYVLLVPAGAEEDADGEIEIQAYSFTENEDGTEGDLQPIPEDSDAEWDMIEEVFNSFIDEN.

This sequence belongs to the UPF0473 family.

The protein is UPF0473 protein str1961 of Streptococcus thermophilus (strain CNRZ 1066).